Reading from the N-terminus, the 350-residue chain is Tetraacyldisaccharide 4'-kinase (350 aa).

Ser-48 to Thr-55 is an ATP binding site.

Belongs to the LpxK family.

The enzyme catalyses a lipid A disaccharide + ATP = a lipid IVA + ADP + H(+). The protein operates within glycolipid biosynthesis; lipid IV(A) biosynthesis; lipid IV(A) from (3R)-3-hydroxytetradecanoyl-[acyl-carrier-protein] and UDP-N-acetyl-alpha-D-glucosamine: step 6/6. In terms of biological role, transfers the gamma-phosphate of ATP to the 4'-position of a tetraacyldisaccharide 1-phosphate intermediate (termed DS-1-P) to form tetraacyldisaccharide 1,4'-bis-phosphate (lipid IVA). The protein is Tetraacyldisaccharide 4'-kinase of Chlorobium limicola (strain DSM 245 / NBRC 103803 / 6330).